The following is a 510-amino-acid chain: Probable allantoinase 2 (510 aa).

6 residues coordinate Zn(2+): His-97, His-99, Lys-185, His-228, His-287, and Asp-360. N6-carboxylysine is present on Lys-185.

This sequence belongs to the metallo-dependent hydrolases superfamily. Allantoinase family. In terms of assembly, homotetramer. Zn(2+) serves as cofactor. In terms of processing, carboxylation allows a single lysine to coordinate two zinc ions.

It catalyses the reaction (S)-allantoin + H2O = allantoate + H(+). It participates in nitrogen metabolism; (S)-allantoin degradation; allantoate from (S)-allantoin: step 1/1. The sequence is that of Probable allantoinase 2 (allB2) from Dictyostelium discoideum (Social amoeba).